A 956-amino-acid chain; its full sequence is RNA-silencing factor ers1 (956 aa).

It is found in the cytoplasm. Its subcellular location is the cytoskeleton. The protein localises to the microtubule organizing center. The protein resides in the spindle pole body. In terms of biological role, involved in RNAi-dependent heterochromatin formation and centromeric silencing. Required for the conversion of centromeric pre-small interfering RNA transcripts into small interfering RNAs, histone H3 'Lys9' methylation, and the recruitment of the RITS complex to centromeric sequences. This Schizosaccharomyces pombe (strain 972 / ATCC 24843) (Fission yeast) protein is RNA-silencing factor ers1 (ers1).